Reading from the N-terminus, the 478-residue chain is Odorant receptor coreceptor (478 aa).

Residues methionine 1–tyrosine 43 lie on the Cytoplasmic side of the membrane. Residues cysteine 44–valine 64 form a helical membrane-spanning segment. At glutamate 65–threonine 73 the chain is on the extracellular side. The chain crosses the membrane as a helical span at residues alanine 74 to isoleucine 94. At arginine 95 to leucine 133 the chain is on the cytoplasmic side. A helical transmembrane segment spans residues leucine 134–phenylalanine 154. Over glutamate 155 to glycine 190 the chain is Extracellular. N-linked (GlcNAc...) asparagine glycosylation is present at asparagine 167. Residues isoleucine 191 to alanine 211 form a helical membrane-spanning segment. Residues asparagine 212–aspartate 349 lie on the Cytoplasmic side of the membrane. Positions serine 261–asparagine 281 are disordered. A helical membrane pass occupies residues alanine 350 to alanine 370. Residues tyrosine 371–tyrosine 382 lie on the Extracellular side of the membrane. The helical transmembrane segment at alanine 383 to phenylalanine 403 threads the bilayer. At glycine 404–threonine 454 the chain is on the cytoplasmic side. A helical membrane pass occupies residues valine 455–valine 475. Over glutamine 476–lysine 478 the chain is Extracellular.

The protein belongs to the insect chemoreceptor superfamily. Heteromeric odorant receptor channel (TC 1.A.69) family. Orco subfamily. In terms of assembly, heterodimer with conventional odorant receptors (ORs). In terms of tissue distribution, present in antennae (at protein level).

The protein resides in the cell membrane. In terms of biological role, odorant coreceptor which complexes with conventional odorant receptors (ORs) to form odorant-sensing units, providing sensitive and prolonged odorant signaling and calcium permeability. Obligate coreceptor of all odorant receptors. Orco is a universal and integral part of the functional odorant receptor, involved in the dendritic localization of other olfactory receptors. Can form functional ion channels in the absence of an odor-binding odorant receptor. Plays a central role in the perception of olfactory stimuli in ants and is essential for ant social organization. Required for pheromone sensing. Also required for the development and maintenance of odorant receptor neurons (ORNs) and of antennal lobe glomeruli. This is Odorant receptor coreceptor from Ooceraea biroi (Clonal raider ant).